Reading from the N-terminus, the 365-residue chain is DNA replication and repair protein RecF (365 aa).

23-30 (GPNGIGKS) is an ATP binding site.

Belongs to the RecF family.

The protein localises to the cytoplasm. Its function is as follows. The RecF protein is involved in DNA metabolism; it is required for DNA replication and normal SOS inducibility. RecF binds preferentially to single-stranded, linear DNA. It also seems to bind ATP. The chain is DNA replication and repair protein RecF from Parasynechococcus marenigrum (strain WH8102).